The following is a 498-amino-acid chain: ATP synthase subunit beta, chloroplastic (498 aa).

172–179 (GGAGVGKT) serves as a coordination point for ATP.

It belongs to the ATPase alpha/beta chains family. In terms of assembly, F-type ATPases have 2 components, CF(1) - the catalytic core - and CF(0) - the membrane proton channel. CF(1) has five subunits: alpha(3), beta(3), gamma(1), delta(1), epsilon(1). CF(0) has four main subunits: a(1), b(1), b'(1) and c(9-12).

It is found in the plastid. The protein localises to the chloroplast thylakoid membrane. The enzyme catalyses ATP + H2O + 4 H(+)(in) = ADP + phosphate + 5 H(+)(out). Produces ATP from ADP in the presence of a proton gradient across the membrane. The catalytic sites are hosted primarily by the beta subunits. The sequence is that of ATP synthase subunit beta, chloroplastic from Aspidistra elatior (Cast-iron plant).